A 307-amino-acid polypeptide reads, in one-letter code: Acetaldehyde dehydrogenase (307 aa).

12–15 contacts NAD(+); it reads SGNI. The active-site Acyl-thioester intermediate is C130. Residues 161 to 169 and N272 each bind NAD(+); that span reads SVGPGTRQN.

It belongs to the acetaldehyde dehydrogenase family.

It carries out the reaction acetaldehyde + NAD(+) + CoA = acetyl-CoA + NADH + H(+). The protein is Acetaldehyde dehydrogenase of Shewanella pealeana (strain ATCC 700345 / ANG-SQ1).